We begin with the raw amino-acid sequence, 374 residues long: MKSLSMLIKPASSNCNLRCTYCFYYDICNNREIKSFGMMKLNLLETIVKRAFNEAEQNCTFAFQGGEPTLVGIDFYREFINFVKKYNTRNINVFYSIQTNGTTINEDWAKFFKENNFLVGISLDGTKEIHDKYRLDANKKGSFNKIMTNIKILNRYKVEYNILTVVNKNTSRHIDKIYKFFKKQDFRFLQFIPCLDPINDPRESHPYSLNPKDYETFLNKLFDLWFKDFLDGRFVSIRYFDDLLSILLGNNPKSCCMNGFCSCEFVIESDGSVYPCDFYVLDEYKIGYIEEKTFSELFNSNVTKNFIDSSLNHDVKCKNCNWYPLCRSGCRRNKEPNFPNGTNDNIFCESFKSFFEKNISKLTYVAKTLAYRQH.

Residues 1–227 (MKSLSMLIKP…LNKLFDLWFK (227 aa)) form the Radical SAM core domain. Residues Cys-15 and Cys-19 each contribute to the [4Fe-4S] cluster site. Tyr-21 lines the S-adenosyl-L-methionine pocket. Position 22 (Cys-22) interacts with [4Fe-4S] cluster. Residues Gly-66, Ser-122, Arg-134, and Leu-195 each contribute to the S-adenosyl-L-methionine site. [4Fe-4S] cluster-binding residues include Cys-255, Cys-261, and Cys-276. Residue Asp-277 is the Proton acceptor of the active site. Residues Cys-317, Cys-320, Cys-326, Cys-330, and Cys-348 each coordinate [4Fe-4S] cluster.

This sequence belongs to the radical SAM superfamily. Anaerobic sulfatase-maturating enzyme family. [4Fe-4S] cluster serves as cofactor.

It carries out the reaction L-cysteinyl-[sulfatase] + S-adenosyl-L-methionine + H2O = 3-oxo-L-alanyl-[sulfatase] + hydrogen sulfide + 5'-deoxyadenosine + L-methionine + 2 H(+). Its pathway is protein modification; sulfatase oxidation. Functionally, involved in 'Cys-type' sulfatase maturation under anaerobic conditions. Catalyzes the post-translational modification of cysteine into 3-oxoalanine (also known as C(alpha)-formylglycine (FGly)), by a free radical chemical mechanism initiated via the reductive cleavage of S-adenosyl-L-methionine (SAM). The chain is Cysteine-type anaerobic sulfatase-maturating enzyme from Clostridium novyi (strain NT).